Here is a 170-residue protein sequence, read N- to C-terminus: Shikimate kinase (170 aa).

15–20 lines the ATP pocket; sequence GAGKTT. Residue Thr-19 participates in Mg(2+) binding. Substrate is bound by residues Asp-37, Arg-61, and Gly-83. Residue Arg-121 participates in ATP binding. Arg-140 is a binding site for substrate.

This sequence belongs to the shikimate kinase family. Monomer. The cofactor is Mg(2+).

The protein resides in the cytoplasm. It catalyses the reaction shikimate + ATP = 3-phosphoshikimate + ADP + H(+). The protein operates within metabolic intermediate biosynthesis; chorismate biosynthesis; chorismate from D-erythrose 4-phosphate and phosphoenolpyruvate: step 5/7. Functionally, catalyzes the specific phosphorylation of the 3-hydroxyl group of shikimic acid using ATP as a cosubstrate. The polypeptide is Shikimate kinase (Neisseria gonorrhoeae (strain ATCC 700825 / FA 1090)).